We begin with the raw amino-acid sequence, 359 residues long: Molybdenum import ATP-binding protein ModC (359 aa).

In terms of domain architecture, ABC transporter spans 1–229 (MLELNFSQQL…SALRPWLQRE (229 aa)). 31 to 38 (GLSGAGKT) serves as a coordination point for ATP. The region spanning 289–354 (SSSIRNILPV…IKSVSFNRQN (66 aa)) is the Mop domain.

This sequence belongs to the ABC transporter superfamily. Molybdate importer (TC 3.A.1.8) family. In terms of assembly, the complex is composed of two ATP-binding proteins (ModC), two transmembrane proteins (ModB) and a solute-binding protein (ModA).

It localises to the cell inner membrane. It carries out the reaction molybdate(out) + ATP + H2O = molybdate(in) + ADP + phosphate + H(+). Functionally, part of the ABC transporter complex ModABC involved in molybdenum import. Responsible for energy coupling to the transport system. This chain is Molybdenum import ATP-binding protein ModC, found in Yersinia pseudotuberculosis serotype I (strain IP32953).